The chain runs to 54 residues: UPF0391 membrane protein Bpet1858 (54 aa).

Helical transmembrane passes span 5 to 25 (AVVF…GIAA) and 27 to 47 (AAGI…LSIL).

It belongs to the UPF0391 family.

It is found in the cell membrane. The protein is UPF0391 membrane protein Bpet1858 of Bordetella petrii (strain ATCC BAA-461 / DSM 12804 / CCUG 43448).